Here is a 100-residue protein sequence, read N- to C-terminus: Integration host factor subunit alpha (100 aa).

This sequence belongs to the bacterial histone-like protein family. As to quaternary structure, heterodimer of an alpha and a beta chain.

This protein is one of the two subunits of integration host factor, a specific DNA-binding protein that functions in genetic recombination as well as in transcriptional and translational control. This is Integration host factor subunit alpha from Ectopseudomonas mendocina (strain ymp) (Pseudomonas mendocina).